Consider the following 471-residue polypeptide: Glutamate--tRNA ligase (471 aa).

A 'HIGH' region motif is present at residues 9–19 (PSPTGYLHVGG). Zn(2+) contacts are provided by Cys-98, Cys-100, Cys-125, and Asp-127. Residues 237-241 (KLSKR) carry the 'KMSKS' region motif. Lys-240 provides a ligand contact to ATP.

It belongs to the class-I aminoacyl-tRNA synthetase family. Glutamate--tRNA ligase type 1 subfamily. In terms of assembly, monomer. Zn(2+) is required as a cofactor.

It localises to the cytoplasm. It catalyses the reaction tRNA(Glu) + L-glutamate + ATP = L-glutamyl-tRNA(Glu) + AMP + diphosphate. Functionally, catalyzes the attachment of glutamate to tRNA(Glu) in a two-step reaction: glutamate is first activated by ATP to form Glu-AMP and then transferred to the acceptor end of tRNA(Glu). The protein is Glutamate--tRNA ligase of Yersinia enterocolitica serotype O:8 / biotype 1B (strain NCTC 13174 / 8081).